A 330-amino-acid chain; its full sequence is Ketol-acid reductoisomerase (NADP(+)) (330 aa).

Residues 1–181 enclose the KARI N-terminal Rossmann domain; sequence MNVYYEQDAD…GGTKAGVIET (181 aa). NADP(+) contacts are provided by residues 24–27, R47, S50, S52, and 82–85; these read YGSQ and DQNQ. H107 is a catalytic residue. G133 provides a ligand contact to NADP(+). The region spanning 182-327 is the KARI C-terminal knotted domain; the sequence is SIKNETETDL…AKLRDMMSWL (146 aa). Mg(2+)-binding residues include D190, E194, E226, and E230. Residue S251 coordinates substrate.

Belongs to the ketol-acid reductoisomerase family. Mg(2+) is required as a cofactor.

It carries out the reaction (2R)-2,3-dihydroxy-3-methylbutanoate + NADP(+) = (2S)-2-acetolactate + NADPH + H(+). The catalysed reaction is (2R,3R)-2,3-dihydroxy-3-methylpentanoate + NADP(+) = (S)-2-ethyl-2-hydroxy-3-oxobutanoate + NADPH + H(+). It functions in the pathway amino-acid biosynthesis; L-isoleucine biosynthesis; L-isoleucine from 2-oxobutanoate: step 2/4. The protein operates within amino-acid biosynthesis; L-valine biosynthesis; L-valine from pyruvate: step 2/4. Functionally, involved in the biosynthesis of branched-chain amino acids (BCAA). Catalyzes an alkyl-migration followed by a ketol-acid reduction of (S)-2-acetolactate (S2AL) to yield (R)-2,3-dihydroxy-isovalerate. In the isomerase reaction, S2AL is rearranged via a Mg-dependent methyl migration to produce 3-hydroxy-3-methyl-2-ketobutyrate (HMKB). In the reductase reaction, this 2-ketoacid undergoes a metal-dependent reduction by NADPH to yield (R)-2,3-dihydroxy-isovalerate. This is Ketol-acid reductoisomerase (NADP(+)) from Pelodictyon phaeoclathratiforme (strain DSM 5477 / BU-1).